The sequence spans 424 residues: Zinc finger and BTB domain-containing protein 6 (424 aa).

The 65-residue stretch at 33–97 folds into the BTB domain; sequence CDVSIYINDT…CYTGALEVKR (65 aa). Position 202 is a phosphoserine (S202). 4 consecutive C2H2-type zinc fingers follow at residues 301–323, 326–348, 354–376, and 382–405; these read HQCPRCPRGFLHVENYLRHLKMH, FLCLQCGKTFTQKKNLNRHIRGH, FQCTVCLKTFTAKSTLQDHLNIH, and YKCHCCDMDFKHKSALKKHLTSVH. Residues 402-424 are disordered; it reads TSVHGRSSGEKLSRPDLKRQSLL. Residues 408–424 are compositionally biased toward basic and acidic residues; that stretch reads SSGEKLSRPDLKRQSLL.

Widely expressed with highest levels in brain.

It localises to the nucleus. May be involved in transcriptional regulation. The protein is Zinc finger and BTB domain-containing protein 6 (ZBTB6) of Homo sapiens (Human).